Consider the following 460-residue polypeptide: Bifunctional protein GlmU (460 aa).

The segment at 1–235 (MALSAAIILA…PLSVEGVNDR (235 aa)) is pyrophosphorylase. UDP-N-acetyl-alpha-D-glucosamine-binding positions include 9–12 (LAAG), Lys-23, Gln-76, and 81–82 (GT). Position 109 (Asp-109) interacts with Mg(2+). Residues Gly-146, Glu-161, Asn-176, and Asn-233 each coordinate UDP-N-acetyl-alpha-D-glucosamine. A Mg(2+)-binding site is contributed by Asn-233. The linker stretch occupies residues 236-256 (VQLAALAKAHNKRVCEHWMRE). The N-acetyltransferase stretch occupies residues 257–460 (GVTILDPDTT…VEGWKPEWER (204 aa)). Positions 338 and 356 each coordinate UDP-N-acetyl-alpha-D-glucosamine. His-368 acts as the Proton acceptor in catalysis. Residues Tyr-371 and Asn-382 each coordinate UDP-N-acetyl-alpha-D-glucosamine. Residues 391 to 392 (NY) and Ala-428 contribute to the acetyl-CoA site.

This sequence in the N-terminal section; belongs to the N-acetylglucosamine-1-phosphate uridyltransferase family. In the C-terminal section; belongs to the transferase hexapeptide repeat family. Homotrimer. Requires Mg(2+) as cofactor.

The protein localises to the cytoplasm. The enzyme catalyses alpha-D-glucosamine 1-phosphate + acetyl-CoA = N-acetyl-alpha-D-glucosamine 1-phosphate + CoA + H(+). The catalysed reaction is N-acetyl-alpha-D-glucosamine 1-phosphate + UTP + H(+) = UDP-N-acetyl-alpha-D-glucosamine + diphosphate. Its pathway is nucleotide-sugar biosynthesis; UDP-N-acetyl-alpha-D-glucosamine biosynthesis; N-acetyl-alpha-D-glucosamine 1-phosphate from alpha-D-glucosamine 6-phosphate (route II): step 2/2. It participates in nucleotide-sugar biosynthesis; UDP-N-acetyl-alpha-D-glucosamine biosynthesis; UDP-N-acetyl-alpha-D-glucosamine from N-acetyl-alpha-D-glucosamine 1-phosphate: step 1/1. The protein operates within bacterial outer membrane biogenesis; LPS lipid A biosynthesis. Its function is as follows. Catalyzes the last two sequential reactions in the de novo biosynthetic pathway for UDP-N-acetylglucosamine (UDP-GlcNAc). The C-terminal domain catalyzes the transfer of acetyl group from acetyl coenzyme A to glucosamine-1-phosphate (GlcN-1-P) to produce N-acetylglucosamine-1-phosphate (GlcNAc-1-P), which is converted into UDP-GlcNAc by the transfer of uridine 5-monophosphate (from uridine 5-triphosphate), a reaction catalyzed by the N-terminal domain. This chain is Bifunctional protein GlmU, found in Bifidobacterium adolescentis (strain ATCC 15703 / DSM 20083 / NCTC 11814 / E194a).